We begin with the raw amino-acid sequence, 149 residues long: Large ribosomal subunit protein bL9 (149 aa).

K89 is modified (N6-acetyllysine).

Belongs to the bacterial ribosomal protein bL9 family.

Functionally, binds to the 23S rRNA. The protein is Large ribosomal subunit protein bL9 of Shigella dysenteriae serotype 1 (strain Sd197).